A 185-amino-acid polypeptide reads, in one-letter code: Ribosome-recycling factor (185 aa).

Belongs to the RRF family.

It localises to the cytoplasm. Its function is as follows. Responsible for the release of ribosomes from messenger RNA at the termination of protein biosynthesis. May increase the efficiency of translation by recycling ribosomes from one round of translation to another. This is Ribosome-recycling factor from Shewanella loihica (strain ATCC BAA-1088 / PV-4).